Consider the following 556-residue polypeptide: Formate--tetrahydrofolate ligase (556 aa).

An ATP-binding site is contributed by 65–72; it reads TPAGEGKS.

Belongs to the formate--tetrahydrofolate ligase family.

It carries out the reaction (6S)-5,6,7,8-tetrahydrofolate + formate + ATP = (6R)-10-formyltetrahydrofolate + ADP + phosphate. It participates in one-carbon metabolism; tetrahydrofolate interconversion. This chain is Formate--tetrahydrofolate ligase, found in Streptococcus equi subsp. zooepidemicus (strain H70).